Reading from the N-terminus, the 377-residue chain is UDP-N-acetylglucosamine--N-acetylmuramyl-(pentapeptide) pyrophosphoryl-undecaprenol N-acetylglucosamine transferase (377 aa).

UDP-N-acetyl-alpha-D-glucosamine-binding positions include 29-31 (TAG), N142, R179, S213, and Q308.

The protein belongs to the glycosyltransferase 28 family. MurG subfamily.

Its subcellular location is the cell membrane. It catalyses the reaction di-trans,octa-cis-undecaprenyl diphospho-N-acetyl-alpha-D-muramoyl-L-alanyl-D-glutamyl-meso-2,6-diaminopimeloyl-D-alanyl-D-alanine + UDP-N-acetyl-alpha-D-glucosamine = di-trans,octa-cis-undecaprenyl diphospho-[N-acetyl-alpha-D-glucosaminyl-(1-&gt;4)]-N-acetyl-alpha-D-muramoyl-L-alanyl-D-glutamyl-meso-2,6-diaminopimeloyl-D-alanyl-D-alanine + UDP + H(+). The protein operates within cell wall biogenesis; peptidoglycan biosynthesis. Functionally, cell wall formation. Catalyzes the transfer of a GlcNAc subunit on undecaprenyl-pyrophosphoryl-MurNAc-pentapeptide (lipid intermediate I) to form undecaprenyl-pyrophosphoryl-MurNAc-(pentapeptide)GlcNAc (lipid intermediate II). The sequence is that of UDP-N-acetylglucosamine--N-acetylmuramyl-(pentapeptide) pyrophosphoryl-undecaprenol N-acetylglucosamine transferase from Saccharopolyspora erythraea (strain ATCC 11635 / DSM 40517 / JCM 4748 / NBRC 13426 / NCIMB 8594 / NRRL 2338).